An 88-amino-acid chain; its full sequence is Small ribosomal subunit protein bS20 (88 aa).

Positions 1–20 (MPNIKSAIKRTKTNNERRAH) are disordered.

The protein belongs to the bacterial ribosomal protein bS20 family.

In terms of biological role, binds directly to 16S ribosomal RNA. This is Small ribosomal subunit protein bS20 from Bacillus velezensis (strain DSM 23117 / BGSC 10A6 / LMG 26770 / FZB42) (Bacillus amyloliquefaciens subsp. plantarum).